The sequence spans 207 residues: Mediator of RNA polymerase II transcription subunit 21 (207 aa).

Residues 37–121 (PHPDVPDAAP…PDSPRTFASR (85 aa)) form a disordered region. Residues 65–80 (PVPAQSQASPPAQNPA) show a composition bias toward low complexity. Gly residues predominate over residues 84–96 (AGAGTSVGEGGQT). Low complexity predominate over residues 97–108 (PGPAAGAGADPN). The stretch at 146-196 (IDSSEAEQEKRIRELEGELRRVEEERELKMRELKRLRRTLENVLRAVETGL) forms a coiled coil.

The protein belongs to the Mediator complex subunit 21 family. In terms of assembly, component of the Mediator complex.

The protein localises to the nucleus. Component of the Mediator complex, a coactivator involved in the regulated transcription of nearly all RNA polymerase II-dependent genes. Mediator functions as a bridge to convey information from gene-specific regulatory proteins to the basal RNA polymerase II transcription machinery. Mediator is recruited to promoters by direct interactions with regulatory proteins and serves as a scaffold for the assembly of a functional preinitiation complex with RNA polymerase II and the general transcription factors. This is Mediator of RNA polymerase II transcription subunit 21 (srb7) from Neosartorya fischeri (strain ATCC 1020 / DSM 3700 / CBS 544.65 / FGSC A1164 / JCM 1740 / NRRL 181 / WB 181) (Aspergillus fischerianus).